The sequence spans 889 residues: Cytoplasmic aconitate hydratase (889 aa).

Residues glutamine 86 and 205-207 (DSH) each bind substrate. Cysteine 437, cysteine 503, and cysteine 506 together coordinate [4Fe-4S] cluster. Substrate contacts are provided by residues arginine 536, arginine 541, arginine 699, and 779-780 (SR).

This sequence belongs to the aconitase/IPM isomerase family. Interacts (when associated with the 4Fe-4S) with FBXL5. Interacts with frataxin(81-210). Requires [4Fe-4S] cluster as cofactor.

Its subcellular location is the cytoplasm. It localises to the cytosol. It catalyses the reaction citrate = D-threo-isocitrate. In terms of biological role, bifunctional iron sensor that switches between 2 activities depending on iron availability. Iron deprivation, promotes its mRNA binding activity through which it regulates the expression of genes involved in iron uptake, sequestration and utilization. Binds to iron-responsive elements (IRES) in the untranslated region of target mRNAs preventing for instance the translation of ferritin and aminolevulinic acid synthase and stabilizing the transferrin receptor mRNA. Conversely, when cellular iron levels are high, binds a 4Fe-4S cluster which precludes RNA binding activity and promotes the aconitase activity, the isomerization of citrate to isocitrate via cis-aconitate. This Bos taurus (Bovine) protein is Cytoplasmic aconitate hydratase (ACO1).